We begin with the raw amino-acid sequence, 206 residues long: Outer-membrane lipoprotein carrier protein (206 aa).

An N-terminal signal peptide occupies residues 1–21; sequence MKKLLCAVLLSPLLYSNAVLA.

Belongs to the LolA family. As to quaternary structure, monomer.

It is found in the periplasm. Functionally, participates in the translocation of lipoproteins from the inner membrane to the outer membrane. Only forms a complex with a lipoprotein if the residue after the N-terminal Cys is not an aspartate (The Asp acts as a targeting signal to indicate that the lipoprotein should stay in the inner membrane). This chain is Outer-membrane lipoprotein carrier protein, found in Shewanella sp. (strain MR-4).